Here is a 327-residue protein sequence, read N- to C-terminus: Malate dehydrogenase (327 aa).

11-17 (GAAGQIG) serves as a coordination point for NAD(+). Substrate is bound by residues R92 and R98. NAD(+)-binding positions include N105, Q112, and 129 to 131 (VGN). Substrate is bound by residues N131 and R162. The active-site Proton acceptor is the H187.

The protein belongs to the LDH/MDH superfamily. MDH type 2 family.

It carries out the reaction (S)-malate + NAD(+) = oxaloacetate + NADH + H(+). In terms of biological role, catalyzes the reversible oxidation of malate to oxaloacetate. This chain is Malate dehydrogenase, found in Leptospira biflexa serovar Patoc (strain Patoc 1 / Ames).